The chain runs to 955 residues: MTRKNTTTNPWAKFHGPNLGYVIEQYDLYVTGAGSVDPELQELFEIFGAPSFQDDVVTGDNTATHFSPQNTGNIEKILKVVQLVEQIRSFGHTLAHINPMEDAANGQSLLEKAMSELSDADLKAIPAKTVWPDAPEGIHTALDVIHRLKDVYTKSLAYEFSHIQDSEERAWLHQMVESNSLRQPLSNKKRTALLKRLTAVEGFEQFLHKTFVGQKRFSIEGVDMLVPVLDEIVLEGAKNGVEDVMIGMAHRGRLSVLAHVLEKPYSHMFAEFKHAKIEGAVANSGWTGDVKYHLGREQVVSNEEVSTRVTLANNPSHLEFVNPVVEGFARAAQENRKKSGLPDQDTSKSFVILVHGDAAFPGQGIVSETLNLSRLNAYQTGGTIHVIANNAVGFTTDSYDSRSTKYSSDLAKGFDIPIVHVNADDPEACLAAANLAIQYRMLFKKDFLIDLIGYRRYGHNEMDDPAVTQPQVYKKIKNHPTVRAIYADQLQAAGVLNADEVETITQFTQEQLKSDYAQVPPADTSDATIHVKVPDVVAKGIQSIDTGVEIDSLRAINEGLLSWPEGFNVYPKVKKILERRKDALEENGKIEWALAESLAFASILQEGTPIRLTGQDSQRGTFAHRHIVLHDTDTNETYSPLHRLPNINASFSVHNSPLSEAAVVGYEYGYNVFAPETLVMWEAQYGDFSNTAQALFDQYVSAGRAKWGQKSGLVLLLPHGYEGQGPEHSSARPERFLQLAAENNWTVANLTSAAQYFHILRRQASILGTEAVRPLVLMTPKSLLRHPLTLSTASQLSEGRFQPALEQENLGMKPNKVKRLVLSTGKMAIDLAAEIESGKHEYNLDEVHVVRIEQLYPFPAEKVQSIIKRFKNLEEIIWVQEEPRNMGAWHYMAPILFELAGDKVKTGYIGRPDRSSPSGGDPFAHKAEQELIVAHALDVKYNFRQDKQEIEVYSN.

Belongs to the alpha-ketoglutarate dehydrogenase family. As to quaternary structure, homodimer. Part of the 2-oxoglutarate dehydrogenase (OGDH) complex composed of E1 (2-oxoglutarate dehydrogenase), E2 (dihydrolipoamide succinyltransferase) and E3 (dihydrolipoamide dehydrogenase); the complex contains multiple copies of the three enzymatic components (E1, E2 and E3). Thiamine diphosphate serves as cofactor.

It catalyses the reaction N(6)-[(R)-lipoyl]-L-lysyl-[protein] + 2-oxoglutarate + H(+) = N(6)-[(R)-S(8)-succinyldihydrolipoyl]-L-lysyl-[protein] + CO2. E1 component of the 2-oxoglutarate dehydrogenase (OGDH) complex which catalyzes the decarboxylation of 2-oxoglutarate, the first step in the conversion of 2-oxoglutarate to succinyl-CoA and CO(2). In Bacillus cereus (strain B4264), this protein is 2-oxoglutarate dehydrogenase E1 component.